Consider the following 444-residue polypeptide: UDP-N-acetylmuramoylalanine--D-glutamate ligase (444 aa).

109-115 (GSNGKTT) provides a ligand contact to ATP.

It belongs to the MurCDEF family.

Its subcellular location is the cytoplasm. It catalyses the reaction UDP-N-acetyl-alpha-D-muramoyl-L-alanine + D-glutamate + ATP = UDP-N-acetyl-alpha-D-muramoyl-L-alanyl-D-glutamate + ADP + phosphate + H(+). The protein operates within cell wall biogenesis; peptidoglycan biosynthesis. Functionally, cell wall formation. Catalyzes the addition of glutamate to the nucleotide precursor UDP-N-acetylmuramoyl-L-alanine (UMA). This Bacteroides thetaiotaomicron (strain ATCC 29148 / DSM 2079 / JCM 5827 / CCUG 10774 / NCTC 10582 / VPI-5482 / E50) protein is UDP-N-acetylmuramoylalanine--D-glutamate ligase.